The following is a 191-amino-acid chain: Fe/S biogenesis protein NfuA (191 aa).

The [4Fe-4S] cluster site is built by C149 and C152.

Belongs to the NfuA family. Homodimer. Requires [4Fe-4S] cluster as cofactor.

In terms of biological role, involved in iron-sulfur cluster biogenesis. Binds a 4Fe-4S cluster, can transfer this cluster to apoproteins, and thereby intervenes in the maturation of Fe/S proteins. Could also act as a scaffold/chaperone for damaged Fe/S proteins. The protein is Fe/S biogenesis protein NfuA of Hamiltonella defensa subsp. Acyrthosiphon pisum (strain 5AT).